We begin with the raw amino-acid sequence, 443 residues long: Glucose-6-phosphate isomerase (443 aa).

Catalysis depends on glutamate 285, which acts as the Proton donor. Catalysis depends on residues histidine 306 and lysine 420.

Belongs to the GPI family.

The protein resides in the cytoplasm. It carries out the reaction alpha-D-glucose 6-phosphate = beta-D-fructose 6-phosphate. The protein operates within carbohydrate biosynthesis; gluconeogenesis. It participates in carbohydrate degradation; glycolysis; D-glyceraldehyde 3-phosphate and glycerone phosphate from D-glucose: step 2/4. Functionally, catalyzes the reversible isomerization of glucose-6-phosphate to fructose-6-phosphate. This Staphylococcus aureus (strain Mu3 / ATCC 700698) protein is Glucose-6-phosphate isomerase.